Consider the following 160-residue polypeptide: Serine-protein kinase RsbW (160 aa).

It belongs to the anti-sigma-factor family.

It catalyses the reaction L-seryl-[protein] + ATP = O-phospho-L-seryl-[protein] + ADP + H(+). It carries out the reaction L-threonyl-[protein] + ATP = O-phospho-L-threonyl-[protein] + ADP + H(+). In terms of biological role, negative regulator of sigma-B activity. Phosphorylates and inactivates its specific antagonist protein, RsbV. Upon phosphorylation of RsbV, RsbW is released and binds to sigma-B, thereby blocking its ability to form an RNA polymerase holoenzyme (E-sigma-B). The chain is Serine-protein kinase RsbW from Bacillus velezensis (strain DSM 23117 / BGSC 10A6 / LMG 26770 / FZB42) (Bacillus amyloliquefaciens subsp. plantarum).